The following is a 100-amino-acid chain: Small ribosomal subunit protein bS18c (100 aa).

Over residues 1–19 the composition is skewed to basic residues; sequence MDKSKRPFRKSKRSFRRRL. Residues 1–23 form a disordered region; it reads MDKSKRPFRKSKRSFRRRLPPIG.

The protein belongs to the bacterial ribosomal protein bS18 family. In terms of assembly, part of the 30S ribosomal subunit.

The protein resides in the plastid. The protein localises to the chloroplast. This Calycanthus floridus var. glaucus (Eastern sweetshrub) protein is Small ribosomal subunit protein bS18c.